A 262-amino-acid polypeptide reads, in one-letter code: ATP synthase subunit a (262 aa).

The next 5 membrane-spanning stretches (helical) occupy residues A24–F44, V84–L104, D129–V149, L194–A214, and L228–L248.

It belongs to the ATPase A chain family. F-type ATPases have 2 components, CF(1) - the catalytic core - and CF(0) - the membrane proton channel. CF(1) has five subunits: alpha(3), beta(3), gamma(1), delta(1), epsilon(1). CF(0) has three main subunits: a(1), b(2) and c(9-12). The alpha and beta chains form an alternating ring which encloses part of the gamma chain. CF(1) is attached to CF(0) by a central stalk formed by the gamma and epsilon chains, while a peripheral stalk is formed by the delta and b chains.

The protein localises to the cell inner membrane. Its function is as follows. Key component of the proton channel; it plays a direct role in the translocation of protons across the membrane. The polypeptide is ATP synthase subunit a (Actinobacillus pleuropneumoniae serotype 3 (strain JL03)).